We begin with the raw amino-acid sequence, 482 residues long: Protein DETOXIFICATION 13 (482 aa).

12 helical membrane passes run 39-59, 77-97, 124-144, 159-179, 188-208, 218-238, 268-288, 297-317, 337-357, 381-401, 416-436, and 439-459; these read LICF…LQII, LASS…SCAL, LALV…LLVF, AACL…TRYF, LLIT…LLVY, ALAL…LMCF, AAMI…SGLL, VLSV…AIAA, IVVY…STSL, MAPL…LSGI, LGAF…WIHL, and VGLW…LTLV.

Belongs to the multi antimicrobial extrusion (MATE) (TC 2.A.66.1) family.

It is found in the membrane. The protein is Protein DETOXIFICATION 13 of Arabidopsis thaliana (Mouse-ear cress).